We begin with the raw amino-acid sequence, 1078 residues long: mRNA 3'-end-processing protein rna14 (1078 aa).

Disordered regions lie at residues 15–209 and 222–251; these read AMNA…DTPA and QSEN…HDRV. A compositionally biased stretch (polar residues) spans 42 to 55; it reads KTLQDQYSASILDS. Low complexity predominate over residues 58–68; that stretch reads SEIAPSSASPS. A compositionally biased stretch (polar residues) spans 82-115; the sequence is DPSQPADSAYPSQTPSRADSQASVSAPASGTSVP. Over residues 126-139 the composition is skewed to acidic residues; that stretch reads VEDEDEDDAGDADY. Composition is skewed to polar residues over residues 151 to 170 and 190 to 206; these read NTIS…NEDT and FPNS…SKSD. HAT repeat units lie at residues 280–312, 314–345, 356–391, 405–438, 475–508, and 520–552; these read NRID…MESE, NELY…YVRR, QSRR…FIRS, QKMD…FEMG, TTLP…WEKG, and AFKA…FCFL. Disordered stretches follow at residues 632 to 663 and 851 to 950; these read ETFA…ESMK and PTVV…QGSP. Positions 879–894 are enriched in polar residues; it reads GTPSSRYPDASVTNSP. Over residues 896 to 907 the composition is skewed to basic and acidic residues; it reads RPLEDFDDEMNR. A compositionally biased stretch (polar residues) spans 931–949; the sequence is RTQQVISNQTGSQFRSQGS.

The protein resides in the nucleus. The protein localises to the cytoplasm. Component of the cleavage factor IA (CFIA) complex, which is involved in the endonucleolytic cleavage during polyadenylation-dependent pre-mRNA 3'-end formation. This chain is mRNA 3'-end-processing protein rna14 (rna14), found in Aspergillus oryzae (strain ATCC 42149 / RIB 40) (Yellow koji mold).